The primary structure comprises 307 residues: Aspartate carbamoyltransferase catalytic subunit (307 aa).

Residues Arg-54 and Thr-55 each contribute to the carbamoyl phosphate site. Lys-83 lines the L-aspartate pocket. Carbamoyl phosphate is bound by residues Arg-104, His-132, and Gln-135. Positions 165 and 228 each coordinate L-aspartate. Carbamoyl phosphate is bound by residues Leu-267 and Pro-268.

This sequence belongs to the aspartate/ornithine carbamoyltransferase superfamily. ATCase family. Heterododecamer (2C3:3R2) of six catalytic PyrB chains organized as two trimers (C3), and six regulatory PyrI chains organized as three dimers (R2).

It carries out the reaction carbamoyl phosphate + L-aspartate = N-carbamoyl-L-aspartate + phosphate + H(+). Its pathway is pyrimidine metabolism; UMP biosynthesis via de novo pathway; (S)-dihydroorotate from bicarbonate: step 2/3. Functionally, catalyzes the condensation of carbamoyl phosphate and aspartate to form carbamoyl aspartate and inorganic phosphate, the committed step in the de novo pyrimidine nucleotide biosynthesis pathway. The protein is Aspartate carbamoyltransferase catalytic subunit of Clostridium botulinum (strain Okra / Type B1).